The following is a 291-amino-acid chain: ATP synthase gamma chain (291 aa).

The protein belongs to the ATPase gamma chain family. F-type ATPases have 2 components, CF(1) - the catalytic core - and CF(0) - the membrane proton channel. CF(1) has five subunits: alpha(3), beta(3), gamma(1), delta(1), epsilon(1). CF(0) has three main subunits: a, b and c.

The protein resides in the cell inner membrane. Produces ATP from ADP in the presence of a proton gradient across the membrane. The gamma chain is believed to be important in regulating ATPase activity and the flow of protons through the CF(0) complex. This Burkholderia mallei (strain NCTC 10247) protein is ATP synthase gamma chain.